The sequence spans 683 residues: DNA ligase (683 aa).

NAD(+) contacts are provided by residues 36–40 (DAEYD), 85–86 (SL), and E119. K121 acts as the N6-AMP-lysine intermediate in catalysis. NAD(+) contacts are provided by R142, E179, K295, and K319. C413, C416, C431, and C437 together coordinate Zn(2+). The BRCT domain occupies 596-683 (TETLPLSGQT…EHQAHLGGEA (88 aa)).

Belongs to the NAD-dependent DNA ligase family. LigA subfamily. It depends on Mg(2+) as a cofactor. Requires Mn(2+) as cofactor.

The catalysed reaction is NAD(+) + (deoxyribonucleotide)n-3'-hydroxyl + 5'-phospho-(deoxyribonucleotide)m = (deoxyribonucleotide)n+m + AMP + beta-nicotinamide D-nucleotide.. Functionally, DNA ligase that catalyzes the formation of phosphodiester linkages between 5'-phosphoryl and 3'-hydroxyl groups in double-stranded DNA using NAD as a coenzyme and as the energy source for the reaction. It is essential for DNA replication and repair of damaged DNA. This is DNA ligase from Hahella chejuensis (strain KCTC 2396).